Reading from the N-terminus, the 731-residue chain is Putative pentatricopeptide repeat-containing protein At1g17630 (731 aa).

PPR repeat units lie at residues 88–118 (SGSL…VSLV), 122–156 (DLRL…GLTG), 157–191 (DGYI…GLKE), 192–222 (NLHV…MPVR), 223–257 (NRMS…EFKP), 258–292 (DEVT…GNAV), 293–327 (SGEA…GFEE), 328–358 (YLPS…IRNK), 359–393 (GIES…NHVC), 398–432 (NVVT…KVLA), 433–467 (NSVT…SMSE), 468–498 (NILV…IRDK), 499–533 (DLIS…GFHP), 534–569 (DGIA…GLEP), and 570–600 (QQEH…MPME). Residues 605–680 (VLGALLNSCR…VSGSSWIEVK (76 aa)) are type E motif. Residues 681-711 (KKKYKFSSGSIVQSEFETIYPVLEDLVSHML) are type E(+) motif.

The protein belongs to the PPR family. PCMP-E subfamily.

The polypeptide is Putative pentatricopeptide repeat-containing protein At1g17630 (PCMP-E72) (Arabidopsis thaliana (Mouse-ear cress)).